Reading from the N-terminus, the 409-residue chain is Immediate early response gene 5-like protein (409 aa).

Disordered regions lie at residues Gln-168–Ser-237 and Gly-312–Pro-335. The segment covering Gln-184 to Pro-195 has biased composition (pro residues). 2 stretches are compositionally biased toward low complexity: residues Ala-196 to Pro-212 and Pro-220 to Ser-237. Residues Gln-313 to Gly-324 are compositionally biased toward acidic residues.

It belongs to the IER family.

The polypeptide is Immediate early response gene 5-like protein (Ier5l) (Rattus norvegicus (Rat)).